Here is a 65-residue protein sequence, read N- to C-terminus: Large ribosomal subunit protein uL30 (65 aa).

It belongs to the universal ribosomal protein uL30 family. In terms of assembly, part of the 50S ribosomal subunit.

In Mycobacterium bovis (strain ATCC BAA-935 / AF2122/97), this protein is Large ribosomal subunit protein uL30.